The sequence spans 237 residues: Eukaryotic translation initiation factor 4E-1 (237 aa).

A disordered region spans residues 1–61 (MVVEDTQKSV…KPPAALARNP (61 aa)). Acidic residues predominate over residues 25–44 (NNDDDDDDLEEGEIPVDGED). Low complexity predominate over residues 47–58 (ATATTKPPAALA). EIF4G-binding regions lie at residues 62-65 (HPLE) and 72-108 (FDNP…NNIH). Residues 80–85 (KQAAWG), Lys112, and 130–131 (WE) each bind mRNA. Cys135 and Cys173 are disulfide-bonded. Residues 156-165 (YTLLAMIGEQ) are EIF4G-binding. MRNA contacts are provided by residues 180–185 (RSRQDK) and 225–229 (KKLDR).

This sequence belongs to the eukaryotic initiation factor 4E family. As to quaternary structure, EIF4F is a multi-subunit complex, the composition of which varies with external and internal environmental conditions. It is composed of at least EIF4A, EIF4E and EIF4G. EIF4E is also known to interact with other partners. In higher plants two isoforms of EIF4F have been identified, named isoform EIF4F and isoform EIF(iso)4F. Isoform EIF4F has subunits p220 and p26, whereas isoform EIF(iso)4F has subunits p82 and p28. (Microbial infection) Interacts with potyvirus viral genome-linked protein (VPg) in the nucleus; this interaction is possible in susceptible hosts but is impaired in resistant plants. Binds to soybean mosaic virus (SMV) VPg in the nucleus. Interacts with SMV nuclear inclusion protein A (NIa-Pro) and nuclear inclusion protein B (NIb) in the cytoplasm. According to the redox status, the Cys-135-Cys-173 disulfide bridge may have a role in regulating protein function by affecting its ability to bind capped mRNA. As to expression, mostly expressed in roots, flowers, immature pods and mature seeds, and, to a lower extent, in stems and leaves.

The protein resides in the nucleus. It is found in the cytoplasm. Component of the protein complex eIF4F, which is involved in the recognition of the mRNA cap, ATP-dependent unwinding of 5'-terminal secondary structure and recruitment of mRNA to the ribosome. Recognizes and binds the 7-methylguanosine-containing mRNA cap during an early step in the initiation of protein synthesis and facilitates ribosome binding by inducing the unwinding of the mRNAs secondary structures. Key component of recessive resistance to potyviruses (e.g. soybean mosaic virus (SMV), bean common mosaic virus (BCMV) and watermelon mosaic virus (WMV), but not bean pod mottle virus (BPMV)). Its function is as follows. (Microbial infection) Susceptibility host factor required for viral infection by recruiting viral RNAs to the host ribosomal complex via an interaction with viral genome-linked protein (VPg). The chain is Eukaryotic translation initiation factor 4E-1 from Glycine max (Soybean).